The chain runs to 271 residues: Cobalt import ATP-binding protein CbiO (271 aa).

The ABC transporter domain maps to 2–236 (LATSDLWFRY…TEAMEHAGLT (235 aa)). 34–41 (GANGCGKS) serves as a coordination point for ATP.

This sequence belongs to the ABC transporter superfamily. Cobalt importer (TC 3.A.1.18.1) family. Forms an energy-coupling factor (ECF) transporter complex composed of an ATP-binding protein (A component, CbiO), a transmembrane protein (T component, CbiQ) and 2 possible substrate-capture proteins (S components, CbiM and CbiN) of unknown stoichimetry.

It localises to the cell inner membrane. It participates in cofactor biosynthesis; adenosylcobalamin biosynthesis. Functionally, part of the energy-coupling factor (ECF) transporter complex CbiMNOQ involved in cobalt import. Presumably responsible for energy coupling to the transport system. The sequence is that of Cobalt import ATP-binding protein CbiO from Salmonella typhi.